The following is a 145-amino-acid chain: Maximins 3/H3 type 1 (145 aa).

The N-terminal stretch at 1–18 is a signal peptide; sequence MNFKYIVAVSFLIASAYA. 2 consecutive propeptides follow at residues 19–43 and 74–124; these read RSVQ…LREI and RIAE…KEKR. An Isoleucine amide modification is found at Ile-144.

The protein belongs to the bombinin family. In terms of tissue distribution, expressed by the skin glands.

It localises to the secreted. Functionally, maximin-3 shows antibacterial activity against both Gram-positive and Gram-negative bacteria. It also shows antimicrobial activity against the fungus C.albicans, but not against A.flavus nor P.uticale. It has little hemolytic activity. It possess a significant cytotoxicity against tumor cell lines. It possess a significant anti-HIV activity. It shows high spermicidal activity. In terms of biological role, maximin-H3 shows antibacterial activity against both Gram-positive and Gram-negative bacteria. It also shows antimicrobial activity against the fungus C.albicans. Shows strong hemolytic activity. This is Maximins 3/H3 type 1 from Bombina maxima (Giant fire-bellied toad).